We begin with the raw amino-acid sequence, 476 residues long: Serine--tRNA ligase (476 aa).

Position 279 to 281 (279 to 281 (TAE)) interacts with L-serine. 310-312 (RAE) provides a ligand contact to ATP. Glu-333 contacts L-serine. 400-403 (EISS) provides a ligand contact to ATP. Ser-435 contacts L-serine.

Belongs to the class-II aminoacyl-tRNA synthetase family. Type-1 seryl-tRNA synthetase subfamily. In terms of assembly, homodimer. The tRNA molecule binds across the dimer.

Its subcellular location is the cytoplasm. The enzyme catalyses tRNA(Ser) + L-serine + ATP = L-seryl-tRNA(Ser) + AMP + diphosphate + H(+). It carries out the reaction tRNA(Sec) + L-serine + ATP = L-seryl-tRNA(Sec) + AMP + diphosphate + H(+). It participates in aminoacyl-tRNA biosynthesis; selenocysteinyl-tRNA(Sec) biosynthesis; L-seryl-tRNA(Sec) from L-serine and tRNA(Sec): step 1/1. In terms of biological role, catalyzes the attachment of serine to tRNA(Ser). Is also able to aminoacylate tRNA(Sec) with serine, to form the misacylated tRNA L-seryl-tRNA(Sec), which will be further converted into selenocysteinyl-tRNA(Sec). The chain is Serine--tRNA ligase from Rhodopseudomonas palustris (strain BisA53).